The primary structure comprises 234 residues: tRNA1(Val) (adenine(37)-N6)-methyltransferase (234 aa).

Belongs to the methyltransferase superfamily. tRNA (adenine-N(6)-)-methyltransferase family.

It is found in the cytoplasm. It carries out the reaction adenosine(37) in tRNA1(Val) + S-adenosyl-L-methionine = N(6)-methyladenosine(37) in tRNA1(Val) + S-adenosyl-L-homocysteine + H(+). Specifically methylates the adenine in position 37 of tRNA(1)(Val) (anticodon cmo5UAC). The sequence is that of tRNA1(Val) (adenine(37)-N6)-methyltransferase from Aliivibrio salmonicida (strain LFI1238) (Vibrio salmonicida (strain LFI1238)).